Consider the following 167-residue polypeptide: Adenylylsulfate reductase subunit beta (167 aa).

4Fe-4S ferredoxin-type domains lie at 1–35 (MPTF…LDPE) and 38–67 (KAFN…ARPY). Residues Cys10, Cys13, Cys21, Cys25, Cys47, Cys50, Cys53, and Cys57 each coordinate [4Fe-4S] cluster.

Heterodimer composed of AprA and AprB. The heterodimers can dimerize to form heterotetramers. [4Fe-4S] cluster serves as cofactor.

Its subcellular location is the cytoplasm. Its function is as follows. Iron-sulfur cluster subunit of the adenylylsulfate reductase which catalyzes reversibly the reduction of adenosine 5'-phosphosulfate (APS) to sulfite and AMP during dissimilatory sulfate reduction. The iron-sulfur cluster 2 is thought to accept electrons from a still unknown electron donor and transfer electrons to the iron-sulfur cluster 1 of this protein and then onto the FAD of AprA. In Megalodesulfovibrio gigas (strain ATCC 19364 / DSM 1382 / NCIMB 9332 / VKM B-1759) (Desulfovibrio gigas), this protein is Adenylylsulfate reductase subunit beta.